Reading from the N-terminus, the 122-residue chain is MTSPHNHMAYLKHHVLMTVDADHHRSLRTRLGTQHVLTKIQGIKTKESHGAFQFAEDKARLEAVSRSILLKRARTNKNKNALKEINVEKVDSILVTSEAVHDDIDEIYHATIEDECGILNQD.

Belongs to the herpesviridae UL96 family.

The protein is Protein U68 of Elephas maximus (Indian elephant).